The primary structure comprises 485 residues: MSSLSILFATSEMAPWVKTGGLGDVAAALPAALRKAGHDIRVLLPAYPALKQAFPTATTVAELPAFAPGLPASRLLAAQTGKLELLLLDCPELYDRPGNPYLDATGRDWPDNALRFGLLSRVAARLGQPDSPLSWQPDIVHANDWQTALAPAYLHYQGGAASVVTVHNIAFQGCFGREMLAALGLPEHAWRFDGVEYHDQLSFLKAGLQLASQISTVSPTYAREIQDEHFGYGLAPLLRHRSAELRGILNGVDTDLWNPATDPVLATGYAANRLAAKRTNKAALQTEMGLEVTADRPLFGVISRLTSQKGLDLLLTVAEGLPELPAQLVVLGSGDKLMEAGFVELAKRFPAQIVVKIGFDEGLAHRIEAGADCFVMPSRFEPCGLNQMYSLRYGTPPIVRATGGLADTVVDVCEDTLADKSANGFVLDGDTPHALWLTIEHVCRTWQDKKLWQRIQQNGMRRDFSWTHAANEYVALYRDAIATRA.

K18 contacts ADP-alpha-D-glucose.

It belongs to the glycosyltransferase 1 family. Bacterial/plant glycogen synthase subfamily.

The catalysed reaction is [(1-&gt;4)-alpha-D-glucosyl](n) + ADP-alpha-D-glucose = [(1-&gt;4)-alpha-D-glucosyl](n+1) + ADP + H(+). The protein operates within glycan biosynthesis; glycogen biosynthesis. In terms of biological role, synthesizes alpha-1,4-glucan chains using ADP-glucose. The sequence is that of Glycogen synthase from Dechloromonas aromatica (strain RCB).